The following is a 214-amino-acid chain: Phosphatidylserine decarboxylase proenzyme (214 aa).

Ser-183 functions as the Schiff-base intermediate with substrate; via pyruvic acid in the catalytic mechanism. Ser-183 carries the post-translational modification Pyruvic acid (Ser); by autocatalysis.

Belongs to the phosphatidylserine decarboxylase family. PSD-A subfamily. In terms of assembly, heterodimer of a large membrane-associated beta subunit and a small pyruvoyl-containing alpha subunit. The cofactor is pyruvate. Is synthesized initially as an inactive proenzyme. Formation of the active enzyme involves a self-maturation process in which the active site pyruvoyl group is generated from an internal serine residue via an autocatalytic post-translational modification. Two non-identical subunits are generated from the proenzyme in this reaction, and the pyruvate is formed at the N-terminus of the alpha chain, which is derived from the carboxyl end of the proenzyme. The post-translation cleavage follows an unusual pathway, termed non-hydrolytic serinolysis, in which the side chain hydroxyl group of the serine supplies its oxygen atom to form the C-terminus of the beta chain, while the remainder of the serine residue undergoes an oxidative deamination to produce ammonia and the pyruvoyl prosthetic group on the alpha chain.

It is found in the cell membrane. The enzyme catalyses a 1,2-diacyl-sn-glycero-3-phospho-L-serine + H(+) = a 1,2-diacyl-sn-glycero-3-phosphoethanolamine + CO2. It participates in phospholipid metabolism; phosphatidylethanolamine biosynthesis; phosphatidylethanolamine from CDP-diacylglycerol: step 2/2. Catalyzes the formation of phosphatidylethanolamine (PtdEtn) from phosphatidylserine (PtdSer). The protein is Phosphatidylserine decarboxylase proenzyme of Desulfotalea psychrophila (strain LSv54 / DSM 12343).